Consider the following 740-residue polypeptide: MLKLFSAFRKNKIWDFNGGIHPPEMKTQTNGTPLRQVLLAQHFVIPLKQHIGAEGELCVSVGDKVLRGQPLTRGRGKMLPVHAPTSGTVTAIAPHSTAHPSALAELSVIIDADGEDCWIPRDGWVDYRSRSREELIERIHQFGVAGLGGAGFPTGVKLQGGGDKIETLIINAAECEPYITADDRLMQDCAAQVVEGIRILAHILQPREILIGIEDNKPQAISMLRAVLADSNDISLRVIPTKYPSGGAKQLTYILTGKQVPHGGRSSDIGVLMQNVGTAYAVKRAVIDGEPITERVVTLTGEAIARPGNVWARLGTPVRHLLNDAGFCPSADQMVIMGGPLMGFTLPWLDVPVVKITNCLLAPSANELGEPQEEQSCIRCSACADACPVDLLPQQLYWFSKGQQHDKATTHNIADCIECGACAWVCPSNIPLVQYFRQEKAEIAAIRQEEKRAAEAKARFEARQARLEREKATRLERHKSAAVQPAAKDKDAIAAALARVKEKQAQATQPIVIKAGERPDNSAIIAEREARKAQARAKQAELEQTNDAATVAEPRKTAVEAAIARSKARKLEQQQANAEPEEQVDPRKAAVEAAIARAKARKLEQQQANAEPEEQVDPRKAAVEAAIARAKARKLEQQQANAEPEEQVDPRKAAVEAAIARAKARKLEQQQANAEPEEQVDPRKAAVEAAIARAKARKLEQQQANAEPEEQVDPRKAAVAAAIARVQAKKAAQQKVVNED.

2 consecutive 4Fe-4S ferredoxin-type domains span residues 369–397 (GEPQ…QQLY) and 407–436 (KATT…VQYF). [4Fe-4S] cluster-binding residues include C377, C380, C383, C387, C416, C419, C422, and C426. Residues 598 to 716 (AKARKLEQQQ…EPEEQVDPRK (119 aa)) form a disordered region.

Belongs to the 4Fe4S bacterial-type ferredoxin family. RnfC subfamily. In terms of assembly, the complex is composed of six subunits: RsxA, RsxB, RsxC, RsxD, RsxE and RsxG. The cofactor is [4Fe-4S] cluster.

Its subcellular location is the cell inner membrane. In terms of biological role, part of a membrane-bound complex that couples electron transfer with translocation of ions across the membrane. Required to maintain the reduced state of SoxR. The sequence is that of Ion-translocating oxidoreductase complex subunit C from Shigella flexneri serotype 5b (strain 8401).